The following is a 115-amino-acid chain: NADH-ubiquinone oxidoreductase chain 3 (115 aa).

Helical transmembrane passes span 4–24, 55–75, and 84–104; these read ALTL…AFWL, FFLV…LLPL, and LTTM…SLAY.

Belongs to the complex I subunit 3 family. In terms of assembly, core subunit of respiratory chain NADH dehydrogenase (Complex I) which is composed of 45 different subunits. Interacts with TMEM186. Interacts with TMEM242.

It localises to the mitochondrion inner membrane. It catalyses the reaction a ubiquinone + NADH + 5 H(+)(in) = a ubiquinol + NAD(+) + 4 H(+)(out). In terms of biological role, core subunit of the mitochondrial membrane respiratory chain NADH dehydrogenase (Complex I) which catalyzes electron transfer from NADH through the respiratory chain, using ubiquinone as an electron acceptor. Essential for the catalytic activity of complex I. The chain is NADH-ubiquinone oxidoreductase chain 3 from Halichoerus grypus (Gray seal).